Consider the following 173-residue polypeptide: Small ribosomal subunit protein uS5 (173 aa).

One can recognise an S5 DRBM domain in the interval 18–81 (LREKMIAVNR…EQARRGMFKV (64 aa)).

It belongs to the universal ribosomal protein uS5 family. As to quaternary structure, part of the 30S ribosomal subunit. Contacts proteins S4 and S8.

With S4 and S12 plays an important role in translational accuracy. Functionally, located at the back of the 30S subunit body where it stabilizes the conformation of the head with respect to the body. The chain is Small ribosomal subunit protein uS5 from Bordetella petrii (strain ATCC BAA-461 / DSM 12804 / CCUG 43448).